The sequence spans 801 residues: Phenylalanine--tRNA ligase beta subunit (801 aa).

Positions A39–F153 constitute a tRNA-binding domain. The 76-residue stretch at T406–T481 folds into the B5 domain. 4 residues coordinate Mg(2+): D459, D465, E468, and E469. The 94-residue stretch at T708–R801 folds into the FDX-ACB domain.

The protein belongs to the phenylalanyl-tRNA synthetase beta subunit family. Type 1 subfamily. In terms of assembly, tetramer of two alpha and two beta subunits. It depends on Mg(2+) as a cofactor.

It is found in the cytoplasm. It carries out the reaction tRNA(Phe) + L-phenylalanine + ATP = L-phenylalanyl-tRNA(Phe) + AMP + diphosphate + H(+). The protein is Phenylalanine--tRNA ligase beta subunit of Streptococcus agalactiae serotype Ia (strain ATCC 27591 / A909 / CDC SS700).